Reading from the N-terminus, the 449-residue chain is Sensor histidine protein kinase/phosphatase WalK (449 aa).

Topologically, residues 1–13 (MLDLLKQTIFTRD) are extracellular. A helical transmembrane segment spans residues 14–34 (FIFILILLGFILVVTLLLLEN). Residues 35-87 (RRDNIQLKQINQKVKDLIAGDYSKVLDMQGGSEITNITNNLNDLSEVIRLTQE) form the HAMP domain. Residues 35 to 449 (RRDNIQLKQI…EEVWEDEVED (415 aa)) are Cytoplasmic-facing. The region spanning 92–158 (ESKRLNSILF…YELRDLITQS (67 aa)) is the PAS domain. The 55-residue stretch at 157–211 (QSPELLLDSQDINGEYLNLRVRFALIRRESGFISGLVAVLHDTTEQEKEERERRL) folds into the PAC domain. The region spanning 215 to 435 (NVSHELRTPL…TFTIVLPYDK (221 aa)) is the Histidine kinase domain. H218 bears the Phosphohistidine mark.

In terms of assembly, may form homodimers. May interact with serine/threonine-protein kinase StkP; the interaction may play a role in regulating Walk signal transduction. In terms of processing, autophosphorylated.

It localises to the membrane. The catalysed reaction is ATP + protein L-histidine = ADP + protein N-phospho-L-histidine.. In terms of biological role, member of the two-component regulatory system WalK/WalR that regulates genes involved in cell wall metabolism. Functions as a sensor protein kinase which is autophosphorylated at a histidine residue and transfers its phosphate group to WalR. In turn, WalR binds to the upstream promoter regions of target genes to positively and negatively regulate their expression. Required to maintain expression of WalRK regulon genes in exponentially growing cells, including peptidoglycan hydrolase pcsB. Phosphorylates WalR and also capable of dephosphorylation of WalR. WalK phosphatase activity is probably involved in preventing cross-talk from PnpS and other non-cognate sensor kinases during exponential growth. May be considered a potential virulence factor. This chain is Sensor histidine protein kinase/phosphatase WalK, found in Streptococcus pneumoniae serotype 2 (strain D39 / NCTC 7466).